The primary structure comprises 402 residues: MIDRQQILNELISPNSSKIVLLVMDGIGDIPGEDGLTPLQKANTPKLDELAKQSDLGQTIPVLPGITPGSGPGHLGIFGYDPLKYQIGRGILEALGIDVEVGEKDLVARGNFATLEGDIIVDRRAGRPSSEESAKVVEILNENIHKIEDVEVKFYPGKEHRFVVKLTGEGLYDKLEDADPQKEGKPIKYTKALDESSKKSEKIINILIDRIKEVLKDQQKMNFALLRGFSKYPNLPSFGDVYKLRPAAIAVYPMYKGLAKLVGMEILKTGQTIEDEFKTVKENWEKYDFFYVHVKKTDSYGEDGNFESKVKVIEEVDKNLGLLLELKPDVLIVTGDHSTPCAMKGHSFHPVPLMIYSKFTRKGLSKLYNEFECARGTLGTIPAVDVMSLALAYAGRLEKYGA.

It belongs to the BPG-independent phosphoglycerate mutase family. A-PGAM subfamily.

The catalysed reaction is (2R)-2-phosphoglycerate = (2R)-3-phosphoglycerate. It participates in carbohydrate degradation; glycolysis; pyruvate from D-glyceraldehyde 3-phosphate: step 3/5. Functionally, catalyzes the interconversion of 2-phosphoglycerate and 3-phosphoglycerate. This chain is Probable 2,3-bisphosphoglycerate-independent phosphoglycerate mutase, found in Thermosipho melanesiensis (strain DSM 12029 / CIP 104789 / BI429).